Reading from the N-terminus, the 440-residue chain is Chromosomal replication initiator protein DnaA (440 aa).

Positions 1–74 are domain I, interacts with DnaA modulators; the sequence is MNPSQILENL…VQSGNKAIIN (74 aa). A domain II region spans residues 74–99; sequence NIQAQSAKQSNKSTKIDIAHIKAQST. Residues 100–316 are domain III, AAA+ region; the sequence is ILNPSFTFDS…GIIISLNAYA (217 aa). ATP is bound by residues Gly146, Gly148, Lys149, and Thr150. The tract at residues 317 to 440 is domain IV, binds dsDNA; the sequence is TILGQEITLE…KNKILVKSQS (124 aa).

Belongs to the DnaA family. Oligomerizes as a right-handed, spiral filament on DNA at oriC.

It is found in the cytoplasm. In terms of biological role, plays an essential role in the initiation and regulation of chromosomal replication. ATP-DnaA binds to the origin of replication (oriC) to initiate formation of the DNA replication initiation complex once per cell cycle. Binds the DnaA box (a 9 base pair repeat at the origin) and separates the double-stranded (ds)DNA. Forms a right-handed helical filament on oriC DNA; dsDNA binds to the exterior of the filament while single-stranded (ss)DNA is stabiized in the filament's interior. The ATP-DnaA-oriC complex binds and stabilizes one strand of the AT-rich DNA unwinding element (DUE), permitting loading of DNA polymerase. After initiation quickly degrades to an ADP-DnaA complex that is not apt for DNA replication. Binds acidic phospholipids. This chain is Chromosomal replication initiator protein DnaA, found in Campylobacter jejuni subsp. jejuni serotype O:23/36 (strain 81-176).